We begin with the raw amino-acid sequence, 374 residues long: Autophagy-related protein 18e (374 aa).

4 WD repeats span residues lysine 28–isoleucine 66, glutamate 72–glutamate 117, alanine 202–glutamate 242, and valine 247–aspartate 286.

It belongs to the WD repeat PROPPIN family. As to quaternary structure, component of the PI(3,5)P2 regulatory complex at least composed of ATG18, SAC/FIG4, FAB1 and VAC14.

It is found in the preautophagosomal structure membrane. It localises to the vacuole membrane. Functionally, the PI(3,5)P2 regulatory complex regulates both the synthesis and turnover of phosphatidylinositol 3,5-bisphosphate (PtdIns(3,5)P2). Required for autophagy. The polypeptide is Autophagy-related protein 18e (ATG18E) (Arabidopsis thaliana (Mouse-ear cress)).